The sequence spans 131 residues: Large-conductance mechanosensitive channel (131 aa).

A run of 3 helical transmembrane segments spans residues 8-28, 30-50, and 67-87; these read FAMR…GAFG, IVSS…LGGV, and GMFI…FVFV.

Belongs to the MscL family. Homopentamer.

It localises to the cell membrane. Functionally, channel that opens in response to stretch forces in the membrane lipid bilayer. May participate in the regulation of osmotic pressure changes within the cell. The chain is Large-conductance mechanosensitive channel from Geobacillus sp. (strain WCH70).